A 24-amino-acid polypeptide reads, in one-letter code: MNILHICVTSKWFNIDNKIVDHRP.

This Escherichia coli O157:H7 protein is Tryptophanase operon leader peptide (tnaL).